The following is a 320-amino-acid chain: Short-chain dehydrogenase TIC 32 A, chloroplastic (320 aa).

NADP(+) is bound by residues 40-46 (GGTSGIG), 92-93 (DL), N119, and T140. S174 contributes to the substrate binding site. Y196 (proton acceptor) is an active-site residue. Positions 301–317 (DTTLADKLWDFSIKLVE) are interaction with calmodulin.

Belongs to the short-chain dehydrogenases/reductases (SDR) family. Part of the Tic complex. As to expression, expressed in the dehiscence zone of developing pods.

It localises to the plastid. It is found in the chloroplast inner membrane. Functionally, involved in protein precursor import into chloroplasts. Maybe involved in pod abscission or dehiscence (pod shatter). This Brassica napus (Rape) protein is Short-chain dehydrogenase TIC 32 A, chloroplastic.